We begin with the raw amino-acid sequence, 115 residues long: Small polypeptide DEVIL 13 (115 aa).

The segment covering 1–12 (MEEKWKLSKKDT) has biased composition (basic and acidic residues). The interval 1–89 (MEEKWKLSKK…SITQKYSSLA (89 aa)) is disordered. Residues 13–65 (TASSSSSKSKFSRSFSTSASSTKSPIFVRSSSTKCSVPSSSSSSSSSSSISRS) are compositionally biased toward low complexity. Residues 44 to 63 (STKCSVPSSSSSSSSSSSIS) traverse the membrane as a helical segment. The segment at 80 to 111 (SITQKYSSLAKEQKARFYIMRRCVAMLVCWHK) is required for DVL/RTFL small polypeptide activity.

This sequence belongs to the DVL/RTFL small polypeptides family.

It is found in the cell membrane. In terms of biological role, small polypeptide acting as a regulatory molecule which coordinates cellular responses required for differentiation, growth and development, probably by restricting polar cell proliferation in lateral organs and coordinating socket cell recruitment and differentiation at trichome sites. The chain is Small polypeptide DEVIL 13 from Arabidopsis thaliana (Mouse-ear cress).